The chain runs to 76 residues: Small ribosomal subunit protein bS18 (76 aa).

It belongs to the bacterial ribosomal protein bS18 family. As to quaternary structure, part of the 30S ribosomal subunit. Forms a tight heterodimer with protein bS6.

Functionally, binds as a heterodimer with protein bS6 to the central domain of the 16S rRNA, where it helps stabilize the platform of the 30S subunit. In Marinomonas sp. (strain MWYL1), this protein is Small ribosomal subunit protein bS18.